We begin with the raw amino-acid sequence, 401 residues long: Aspartokinase (401 aa).

It belongs to the aspartokinase family.

The catalysed reaction is L-aspartate + ATP = 4-phospho-L-aspartate + ADP. It participates in amino-acid biosynthesis; L-lysine biosynthesis via DAP pathway; (S)-tetrahydrodipicolinate from L-aspartate: step 1/4. The protein operates within amino-acid biosynthesis; L-methionine biosynthesis via de novo pathway; L-homoserine from L-aspartate: step 1/3. Its pathway is amino-acid biosynthesis; L-threonine biosynthesis; L-threonine from L-aspartate: step 1/5. The chain is Aspartokinase (lysC) from Rickettsia conorii (strain ATCC VR-613 / Malish 7).